A 248-amino-acid polypeptide reads, in one-letter code: MRAGQGGSLRLSVCSVIVQAPSRRALDAKARHAVRDDTILRQLKRDAAPRSLIATPQARQVADRFHLYADLRVAIEEQMSLSGRARGRALLPDKIIGNAQVDLIQDDPHVDATHRRRVRHGHRQSRQVVFETVHALRKKGLSCSAIARRTGYGRRSIAKWLTFETPPDRRKSVLKPTSPIKDGNRCGRHLYTISNSAVTSAVSRISSDFSQPGAAPRGRARTVRRRLLSYPINRLAMLSRCGIRRLAT.

This is an uncharacterized protein from Sinorhizobium fredii (strain NBRC 101917 / NGR234).